Here is a 214-residue protein sequence, read N- to C-terminus: MDAPVLYAELNLAETRGLRCTSAPSLPQDACQGPGWHRVALKLGCAGLIFLLMVLSVLVGFLVQKPLIEKCSVAVQENRTEPTGRSATLECPRDWHPHCDKCLFTSQTSRPWADGLVDCNLKGATLLLIQDEEELRLLQNFSKGKGQQFYIGLKYEEVDKVWKWMNGSILNTNLLQITGKDEENSCALISQTEVFSDSCSSDNHWICQKTLKHV.

The Cytoplasmic segment spans residues 1 to 42 (MDAPVLYAELNLAETRGLRCTSAPSLPQDACQGPGWHRVALK). Residues 43 to 63 (LGCAGLIFLLMVLSVLVGFLV) traverse the membrane as a helical; Signal-anchor for type II membrane protein segment. At 64 to 214 (QKPLIEKCSV…WICQKTLKHV (151 aa)) the chain is on the extracellular side. A C-type lectin domain is found at 98–208 (HCDKCLFTSQ…CSSDNHWICQ (111 aa)). 2 disulfides stabilise this stretch: cysteine 119–cysteine 207 and cysteine 186–cysteine 199.

It localises to the membrane. This chain is Killer cell lectin-like receptor subfamily B member 1 (Klrb1), found in Mus musculus (Mouse).